We begin with the raw amino-acid sequence, 1009 residues long: DENN domain-containing protein 2A (1009 aa).

Disordered regions lie at residues 15 to 153, 171 to 334, 434 to 479, and 498 to 532; these read AEAS…LRFQ, KDGS…HRKS, KLLD…KKRK, and KRVKRLSQSMESNSGKVTDENSESDSDTEEKLKAH. Composition is skewed to basic and acidic residues over residues 45–59, 130–147, 218–247, and 275–284; these read NIKDKISEWEGKKEV, QPEREVDPSWGRGREPRL, HPSDLEGREPTPELVEDRKGSCRRPWDRSL, and HAGEGDKDGK. Residues 297 to 314 show a composition bias toward pro residues; sequence PPLPSLPPPPLPSSPPPS. The span at 434–443 shows a compositional bias: basic and acidic residues; it reads KLLDTRKLSR. Positions 503–513 are enriched in polar residues; it reads LSQSMESNSGK. Ser551 bears the Phosphoserine mark. Residues 566–715 enclose the uDENN domain; sequence EYFVVVSLHK…PFPALGKTIL (150 aa). The 134-residue stretch at 737 to 870 folds into the cDENN domain; it reads RLEHVDFESL…LQVALEHILE (134 aa). A dDENN domain is found at 872–969; it reads RNELACEQDE…QERELRRQDA (98 aa).

The protein localises to the cytoplasm. The protein resides in the cytoskeleton. Guanine nucleotide exchange factor (GEF) which may activate RAB9A and RAB9B. Promotes the exchange of GDP to GTP, converting inactive GDP-bound Rab proteins into their active GTP-bound form. May play a role in late endosomes back to trans-Golgi network/TGN transport. This chain is DENN domain-containing protein 2A (DENND2A), found in Homo sapiens (Human).